A 251-amino-acid polypeptide reads, in one-letter code: MKTGILLSLCYDGSNYHGWINQTNAISIQTTLNKAIKKVIKTGQFKTIGASKTDTNVHALDQKVLLIIYFTPILEKFIKAINKALPSDIKILDAKFVDPNFNIREVEYKIYHYYINDHQFDIFTNRYEYFWKHQKIDIIKLQEIFNLFIGEHEFKLFSGLKENEWNQYQTKRTIDDIKVLRINNKVVIQFKASGFIRYQIRIIIANCLNAYLNHKISTTKLVEMLQGIGKKTPFIIDAKGLVLQKIQFNKN.

Asp-54 acts as the Nucleophile in catalysis. Tyr-111 contacts substrate.

It belongs to the tRNA pseudouridine synthase TruA family. Homodimer.

The catalysed reaction is uridine(38/39/40) in tRNA = pseudouridine(38/39/40) in tRNA. Its function is as follows. Formation of pseudouridine at positions 38, 39 and 40 in the anticodon stem and loop of transfer RNAs. This chain is tRNA pseudouridine synthase A, found in Mycoplasma mycoides subsp. mycoides SC (strain CCUG 32753 / NCTC 10114 / PG1).